Reading from the N-terminus, the 248-residue chain is MAAKPAIIALFDVDGTLTAPRKEVTPEMLKFMKELRKVVPVGVVGGSDLTKISEQLGKTVINDYDYVFAENGLVAYKDGAEVAIMSLKKLLGEEKLKEFINFTLKYIAELDIPIKRGTFIEFRNGMINVSPIGRNCSQEERDEFEKYDKIQKVRSTMVSVLREKFGHFNLTFSIGGQISFDVFPRGWDKTYSLRYLEDFNEIHFFGDKTFEGGNDYEIFASERTVGHTVTSPEDTMKQCTEIFLTKKE.

Catalysis depends on Asp-12, which acts as the Nucleophile. Positions 12 and 14 each coordinate Mg(2+). Asp-14 functions as the Proton donor/acceptor in the catalytic mechanism. Arg-21, Arg-123, Arg-134, Arg-141, Ser-179, and Asp-181 together coordinate alpha-D-mannose 1-phosphate. Asp-207, Phe-219, and Thr-224 together coordinate Mg(2+).

This sequence belongs to the eukaryotic PMM family. Homodimer. Requires Mg(2+) as cofactor.

It localises to the cytoplasm. The catalysed reaction is alpha-D-mannose 1-phosphate = D-mannose 6-phosphate. The protein operates within nucleotide-sugar biosynthesis; GDP-alpha-D-mannose biosynthesis; alpha-D-mannose 1-phosphate from D-fructose 6-phosphate: step 2/2. Functionally, catalyzes the interconversion of mannose-6-phosphate to mannose-1-phosphate, the precursor for the synthesis of GDP-mannose. GDP-mannose is an essential sugar nucleotide for the synthesis of D-mannose-containing cell wall polysaccharides (galactomannans and glucomannans), glycolipids, glycoproteins and the antioxidant L-ascorbate. In Spinacia oleracea (Spinach), this protein is Phosphomannomutase.